We begin with the raw amino-acid sequence, 301 residues long: Probable porphobilinogen deaminase (301 aa).

Position 241 is an S-(dipyrrolylmethanemethyl)cysteine (Cys-241).

It belongs to the HMBS family. Dipyrromethane is required as a cofactor.

It carries out the reaction 4 porphobilinogen + H2O = hydroxymethylbilane + 4 NH4(+). Its pathway is porphyrin-containing compound metabolism; protoporphyrin-IX biosynthesis; coproporphyrinogen-III from 5-aminolevulinate: step 2/4. Its function is as follows. Tetrapolymerization of the monopyrrole PBG into the hydroxymethylbilane pre-uroporphyrinogen in several discrete steps. This Pyrobaculum islandicum (strain DSM 4184 / JCM 9189 / GEO3) protein is Probable porphobilinogen deaminase.